The following is a 459-amino-acid chain: Elongation factor 1-alpha (459 aa).

Gly-2 bears the N,N,N-trimethylglycine mark. Lys-3 is modified (N6,N6-dimethyllysine; alternate). The residue at position 3 (Lys-3) is an N6-methyllysine; alternate. One can recognise a tr-type G domain in the interval 5–240; sequence KLHVNVVVIG…DAIEPPTRPT (236 aa). Positions 14-21 are G1; sequence GHVDSGKS. Residue 14–21 participates in GTP binding; it reads GHVDSGKS. An N6-methyllysine modification is found at Lys-30. The G2 stretch occupies residues 70 to 74; sequence GITID. The residue at position 79 (Lys-79) is an N6,N6,N6-trimethyllysine. The tract at residues 91-94 is G3; that stretch reads DAPG. Residues 91-95 and 153-156 contribute to the GTP site; these read DAPGH and NKMD. The interval 153 to 156 is G4; the sequence is NKMD. The tract at residues 192-194 is G5; the sequence is SGW. Position 316 is an N6,N6-dimethyllysine; alternate (Lys-316). At Lys-316 the chain carries N6-methyllysine; alternate. At Lys-390 the chain carries N6-methyllysine.

Belongs to the TRAFAC class translation factor GTPase superfamily. Classic translation factor GTPase family. EF-Tu/EF-1A subfamily.

The protein resides in the cytoplasm. In terms of biological role, this protein promotes the GTP-dependent binding of aminoacyl-tRNA to the A-site of ribosomes during protein biosynthesis. The sequence is that of Elongation factor 1-alpha (TEF1) from Cryptococcus neoformans var. neoformans serotype D (strain B-3501A) (Filobasidiella neoformans).